We begin with the raw amino-acid sequence, 336 residues long: Ketol-acid reductoisomerase (NADP(+)) (336 aa).

The region spanning 2–182 (AKIYYQQDCN…GGARAGVLET (181 aa)) is the KARI N-terminal Rossmann domain. Residues 25-28 (YGSQ), Ser-51, Ser-53, and 83-86 (DEKQ) contribute to the NADP(+) site. His-108 is a catalytic residue. Residue Gly-134 participates in NADP(+) binding. Positions 183–328 (TFREETETDL…AELRGLMSWT (146 aa)) constitute a KARI C-terminal knotted domain. Residues Asp-191, Glu-195, Glu-227, and Glu-231 each coordinate Mg(2+). Ser-252 provides a ligand contact to substrate.

This sequence belongs to the ketol-acid reductoisomerase family. The cofactor is Mg(2+).

The enzyme catalyses (2R)-2,3-dihydroxy-3-methylbutanoate + NADP(+) = (2S)-2-acetolactate + NADPH + H(+). It catalyses the reaction (2R,3R)-2,3-dihydroxy-3-methylpentanoate + NADP(+) = (S)-2-ethyl-2-hydroxy-3-oxobutanoate + NADPH + H(+). It functions in the pathway amino-acid biosynthesis; L-isoleucine biosynthesis; L-isoleucine from 2-oxobutanoate: step 2/4. It participates in amino-acid biosynthesis; L-valine biosynthesis; L-valine from pyruvate: step 2/4. In terms of biological role, involved in the biosynthesis of branched-chain amino acids (BCAA). Catalyzes an alkyl-migration followed by a ketol-acid reduction of (S)-2-acetolactate (S2AL) to yield (R)-2,3-dihydroxy-isovalerate. In the isomerase reaction, S2AL is rearranged via a Mg-dependent methyl migration to produce 3-hydroxy-3-methyl-2-ketobutyrate (HMKB). In the reductase reaction, this 2-ketoacid undergoes a metal-dependent reduction by NADPH to yield (R)-2,3-dihydroxy-isovalerate. The polypeptide is Ketol-acid reductoisomerase (NADP(+)) (Lachnoclostridium phytofermentans (strain ATCC 700394 / DSM 18823 / ISDg) (Clostridium phytofermentans)).